A 129-amino-acid polypeptide reads, in one-letter code: Large ribosomal subunit protein bL12 (129 aa).

It belongs to the bacterial ribosomal protein bL12 family. Homodimer. Part of the ribosomal stalk of the 50S ribosomal subunit. Forms a multimeric L10(L12)X complex, where L10 forms an elongated spine to which 2 to 4 L12 dimers bind in a sequential fashion. Binds GTP-bound translation factors.

Functionally, forms part of the ribosomal stalk which helps the ribosome interact with GTP-bound translation factors. Is thus essential for accurate translation. The protein is Large ribosomal subunit protein bL12 of Fervidobacterium nodosum (strain ATCC 35602 / DSM 5306 / Rt17-B1).